Consider the following 249-residue polypeptide: Probable transcriptional regulatory protein FN1661 (249 aa).

The segment covering 1-10 (MSGHSKWNNI) has biased composition (polar residues). A disordered region spans residues 1–20 (MSGHSKWNNIQHRKGAQDKK).

It belongs to the TACO1 family.

The protein resides in the cytoplasm. The polypeptide is Probable transcriptional regulatory protein FN1661 (Fusobacterium nucleatum subsp. nucleatum (strain ATCC 25586 / DSM 15643 / BCRC 10681 / CIP 101130 / JCM 8532 / KCTC 2640 / LMG 13131 / VPI 4355)).